Consider the following 357-residue polypeptide: Glutamate 5-kinase (357 aa).

Lys-7 contributes to the ATP binding site. Substrate contacts are provided by Ser-43, Asp-130, and Asn-142. Residues 162–163 (TD) and 205–211 (TGGMTTK) each bind ATP. The region spanning 270–353 (EGELQLDAGA…PVVVHRDGLV (84 aa)) is the PUA domain.

It belongs to the glutamate 5-kinase family.

It is found in the cytoplasm. The catalysed reaction is L-glutamate + ATP = L-glutamyl 5-phosphate + ADP. It functions in the pathway amino-acid biosynthesis; L-proline biosynthesis; L-glutamate 5-semialdehyde from L-glutamate: step 1/2. Catalyzes the transfer of a phosphate group to glutamate to form L-glutamate 5-phosphate. This Synechococcus sp. (strain CC9605) protein is Glutamate 5-kinase.